The following is a 145-amino-acid chain: Large ribosomal subunit protein uL13 (145 aa).

This sequence belongs to the universal ribosomal protein uL13 family. As to quaternary structure, part of the 50S ribosomal subunit.

This protein is one of the early assembly proteins of the 50S ribosomal subunit, although it is not seen to bind rRNA by itself. It is important during the early stages of 50S assembly. The chain is Large ribosomal subunit protein uL13 from Haloquadratum walsbyi (strain DSM 16790 / HBSQ001).